Consider the following 529-residue polypeptide: MSLTQTPLLQDLGIQNATLHHNPGVDELYAAALRRGEGKQAATGPLVVHTDKTGRSPKDRFIVEDDLTRDTVWWGGFNTPISPVVFDRLLDKMTHYAEGRELFVQDVFAGTDPQYRIAVRVITEMAYHSLFVRNMFVRPTAEELEHFQPDWTVLNIPSFKADPERDGVRSETFILVNFTRKMILVGGTQYAGENKKGIFGVLNYLLPQRGVMPMHCSANMGEDGDVALFFGLSGTGKTTLSADPSRRLIGDDEHGWTDTGVFNFEGGCYAKVIHLNPEAEPAIYRTTQTYGTVLENVVLKPDGTPDLNDGSLTENTRSAYPITQIDNIVPEGRGGHPKNIVFLTADAFGVLPPLSRLTPEQTMYQFISGFTAKIPGTEQGVTEPQPTFSTCFGAPFMPRHPGEYARLLAQKVRESGANVWLVNTGWTGGQYGEGQRMSIQHTRTLINAALSGQLDNVKFEREPFFGLEIPTEVPGVPKEVLNPREAWADKAAYDRTARKLARMFRENFKRFEDGVDPAITASMPEHREA.

Positions 55, 190, and 196 each coordinate substrate. Residues Lys-196, His-215, and 231–239 (GLSGTGKTT) each bind ATP. 2 residues coordinate Mn(2+): Lys-196 and His-215. Asp-252 is a binding site for Mn(2+). The ATP site is built by Glu-280, Arg-317, and Thr-442. Arg-317 lines the substrate pocket.

It belongs to the phosphoenolpyruvate carboxykinase (ATP) family. It depends on Mn(2+) as a cofactor.

The protein localises to the cytoplasm. It carries out the reaction oxaloacetate + ATP = phosphoenolpyruvate + ADP + CO2. It functions in the pathway carbohydrate biosynthesis; gluconeogenesis. In terms of biological role, involved in the gluconeogenesis. Catalyzes the conversion of oxaloacetate (OAA) to phosphoenolpyruvate (PEP) through direct phosphoryl transfer between the nucleoside triphosphate and OAA. The polypeptide is Phosphoenolpyruvate carboxykinase (ATP) (Deinococcus geothermalis (strain DSM 11300 / CIP 105573 / AG-3a)).